The primary structure comprises 204 residues: Peptidyl-prolyl cis-trans isomerase CYP20-1 (204 aa).

The N-terminal stretch at 1–23 is a signal peptide; the sequence is MASSVTLLLWSLLLLGTLSAIQA. One can recognise a PPIase cyclophilin-type domain in the interval 38–201; that stretch reads YFDVEIDGKA…SKVVIVDSGE (164 aa).

It belongs to the cyclophilin-type PPIase family. In terms of assembly, interacts with the PP2A A subunit PP2AA1/RCN1. Ubiquitous, mostly in aerial organs. Higher levels in leaf and buds, and lower levels in seedlings.

It localises to the endoplasmic reticulum. It is found in the secreted. It catalyses the reaction [protein]-peptidylproline (omega=180) = [protein]-peptidylproline (omega=0). With respect to regulation, binds cyclosporin A (CsA). CsA mediates some of its effects via an inhibitory action on PPIase. PPIases accelerate the folding of proteins. It catalyzes the cis-trans isomerization of proline imidic peptide bonds in oligopeptides. Seems to be involved in root development. The polypeptide is Peptidyl-prolyl cis-trans isomerase CYP20-1 (CYP20-1) (Arabidopsis thaliana (Mouse-ear cress)).